The sequence spans 540 residues: BTB/POZ domain-containing protein 6-A (540 aa).

Residues 138-208 (ADVHFIVGPP…MYSDEIELAP (71 aa)) form the BTB domain.

Interacts with cul3. Interacts (via BTB domain) with zbtb16/plzf. As to expression, expressed in the developing central nervous system.

It localises to the cytoplasm. The protein localises to the nucleus. Its function is as follows. Adapter protein for the cul3 E3 ubiquitin-protein ligase complex. Promotes the export of zbtb16/plzf from the nucleus to the cytoplasm and targets zbtb16/plzf for ubiquitination and degradation. Up-regulates neurog1 expression and antagonizes zbtb16/plzf, to promote neurogenesis. This is BTB/POZ domain-containing protein 6-A (btbd6a) from Danio rerio (Zebrafish).